We begin with the raw amino-acid sequence, 177 residues long: MSELTTVARPYAKAAFDFALEQGALDKWAEMLSFAAAVAQDETIASFLSSSSTVGKTTEVFLGVCGDELDDNAKNFVKVLAENERLPVLPAVSELYQTLRAEHDKEVTVDVKSAVKLLKAQQTALIKALEKRLQRKIKLNCSVDKSIIGGLVIEAGDTVIDGTLRGKLDRLAYALQS.

The protein belongs to the ATPase delta chain family. F-type ATPases have 2 components, F(1) - the catalytic core - and F(0) - the membrane proton channel. F(1) has five subunits: alpha(3), beta(3), gamma(1), delta(1), epsilon(1). F(0) has three main subunits: a(1), b(2) and c(10-14). The alpha and beta chains form an alternating ring which encloses part of the gamma chain. F(1) is attached to F(0) by a central stalk formed by the gamma and epsilon chains, while a peripheral stalk is formed by the delta and b chains.

The protein localises to the cell inner membrane. Functionally, f(1)F(0) ATP synthase produces ATP from ADP in the presence of a proton or sodium gradient. F-type ATPases consist of two structural domains, F(1) containing the extramembraneous catalytic core and F(0) containing the membrane proton channel, linked together by a central stalk and a peripheral stalk. During catalysis, ATP synthesis in the catalytic domain of F(1) is coupled via a rotary mechanism of the central stalk subunits to proton translocation. This protein is part of the stalk that links CF(0) to CF(1). It either transmits conformational changes from CF(0) to CF(1) or is implicated in proton conduction. The protein is ATP synthase subunit delta of Idiomarina loihiensis (strain ATCC BAA-735 / DSM 15497 / L2-TR).